The primary structure comprises 165 residues: Choriogonadotropin subunit beta (165 aa).

Positions 1–20 (METLQGLLLWLLLSMGGAQA) are cleaved as a signal peptide. 6 disulfides stabilise this stretch: C29/C77, C43/C92, C46/C130, C54/C108, C58/C110, and C113/C120. Residues N33 and N50 are each glycosylated (N-linked (GlcNAc...) asparagine). The interval 131 to 165 (DDPNLQASSSSKDPPPSPPSPSRLLEPAGTPFLPQ) is disordered. 3 O-linked (GalNAc...) serine glycosylation sites follow: S141, S147, and S152.

The protein belongs to the glycoprotein hormones subunit beta family. In terms of assembly, heterodimer of a common alpha chain and a unique beta chain which confers biological specificity to thyrotropin, lutropin, follitropin and gonadotropin. Placenta.

It localises to the secreted. Its function is as follows. Stimulates the ovaries to synthesize the steroids that are essential for the maintenance of pregnancy. The chain is Choriogonadotropin subunit beta (CGB) from Papio anubis (Olive baboon).